Consider the following 293-residue polypeptide: MSFFRVAVMLAAMTGLFLAVGYLIGGQSGMVIAFLVAGGMNLFAYWNSDKMVLRMHNAREVDERSAPDLYGIVRQLTQRGGLPMPKVYVIDTPQPNAFATGRNPQNAAVAATTGLMRALTPQELAGVMAHELAHVRHHDTLTMTLTATLAGAISMLANFAFFFGGNRDNNNPLGAVGMIVMMILAPLAAMMVQMAISRTAEYRADRGGAEICGQPLWLASALEKIERAARGIENPSAEQNPATAHLFIINPLNGHRMDNLFTTHPSTANRVAKLRALASGDLAQPRPQRGPWG.

2 helical membrane-spanning segments follow: residues valine 6–glycine 26 and serine 28–serine 48. Histidine 130 contacts Zn(2+). Glutamate 131 is a catalytic residue. Position 134 (histidine 134) interacts with Zn(2+). The next 2 membrane-spanning stretches (helical) occupy residues leucine 145 to glycine 165 and proline 172 to valine 192. Glutamate 201 is a Zn(2+) binding site.

The protein belongs to the peptidase M48B family. The cofactor is Zn(2+).

Its subcellular location is the cell inner membrane. The chain is Protease HtpX homolog from Rhodospirillum rubrum (strain ATCC 11170 / ATH 1.1.1 / DSM 467 / LMG 4362 / NCIMB 8255 / S1).